The sequence spans 399 residues: MEPAGPCGFCPTGEAQPARYTCPRCNVPYCSLRCYRAHGSCAEEFYRDQVLGELRGRSASPSRLATALRRLRQQRETEDEPGDAGLRPGPAPGGLSGLWERLAPAEKVAFERLLSRGEAGRLLPPWRPWWWGRGAGPRLLEELGDAPSGDAEELEPSPARMPPEPVRDEPAAVEQVLGDLPGACPPAVPTRIPALASLSRGRTSPLVRFQLPNVLFAYAHTLALYHGGDEALLSDFCATLLGVSGALGAQQVFASAEEALQAAAHVLEAGEHPPGPLGTRGAMREAARILLGEGPANQKSYTLAALGDLAQTLGRARKQAVAPEERDRLYRARKKCQFLLSWTNENEDALTPLALDCATAHRAHTVAAEDVAALTGELEQLWGGPLPPARRTLIEELPG.

M1 is modified (N-acetylmethionine). Zn(2+)-binding residues include C7, C10, C22, C25, C30, C34, H38, and C41. The HIT-type zinc-finger motif lies at 7–41; that stretch reads CGFCPTGEAQPARYTCPRCNVPYCSLRCYRAHGSC. Disordered regions lie at residues 71–97 and 141–166; these read LRQQ…GLSG and EELG…PEPV.

Interacts (via HIT-type zinc finger) with RUVBL2 in the presence of ATP or ADP; shows a stronger interaction in the presence of ADP.

Its function is as follows. May act as a bridging factor mediating the interaction between the R2TP/Prefoldin-like (R2TP/PFDL) complex and U5 small nuclear ribonucleoprotein (U5 snRNP). Required for the interaction of R2TP complex subunit RPAP3 and prefoldin-like subunit URI1 with U5 snRNP proteins EFTUD2 and PRPF8. May play a role in regulating the composition of the U5 snRNP complex. The sequence is that of Zinc finger HIT domain-containing protein 2 (ZNHIT2) from Bos taurus (Bovine).